Consider the following 93-residue polypeptide: Small ribosomal subunit protein uS19 (93 aa).

It belongs to the universal ribosomal protein uS19 family.

Functionally, protein S19 forms a complex with S13 that binds strongly to the 16S ribosomal RNA. The polypeptide is Small ribosomal subunit protein uS19 (Micrococcus luteus (strain ATCC 4698 / DSM 20030 / JCM 1464 / CCM 169 / CCUG 5858 / IAM 1056 / NBRC 3333 / NCIMB 9278 / NCTC 2665 / VKM Ac-2230) (Micrococcus lysodeikticus)).